The following is a 347-amino-acid chain: MGDLSNRARKILFAAVTEFIATGDPVGSRTLARKYGLDLSAASIRNVLADLEEAGYLHQPHTSAGRIPTDRALRLFIDALVELRSLSPEQQAELSARFTEIYAGANDPLRETGRYLSELSGAAAVVAAPRAELRALAQLRFIPTKPGQLLAVLVFADGSVANRFISVDEAINEGELTRIHNLLTDVIEGRTLGEIRDLFARRLADERLQIDALRRRAFELGSKATADVTPRSEVVIEGQNRLIDLPEYADVDRLKKLMKALEEREELVDLLDRTLAAGAGEVTVFVGSEAGDLGGGQLSLVAAPYMENGRVAGTVGVLGPTRMDYAKVMPLVDATAAAMTEVRGKVK.

The protein belongs to the HrcA family.

In terms of biological role, negative regulator of class I heat shock genes (grpE-dnaK-dnaJ and groELS operons). Prevents heat-shock induction of these operons. The polypeptide is Heat-inducible transcription repressor HrcA (Sorangium cellulosum (strain So ce56) (Polyangium cellulosum (strain So ce56))).